We begin with the raw amino-acid sequence, 213 residues long: Histone H1.3 (213 aa).

Residue Ser-1 is modified to N-acetylserine. The span at 1-15 (SEAPAETAAPAPAEK) shows a compositional bias: low complexity. The interval 1–41 (SEAPAETAAPAPAEKSPAKKKKAAKKPGAGAAKRKAAGPPV) is disordered. Position 15 is an N6-acetyllysine (Lys-15). Residues Lys-35 and Lys-53 each carry the N6-(beta-hydroxybutyryl)lysine modification. An H15 domain is found at 37 to 110 (AGPPVSELIT…GASGSFKLDK (74 aa)). Arg-55 is subject to Citrulline. N6-(beta-hydroxybutyryl)lysine is present on residues Lys-65, Lys-86, and Lys-91. Residues 92–213 (GTLVETKGTG…AKKTAAKKKK (122 aa)) are disordered. At Ser-105 the chain carries Phosphoserine. Lys-107 carries the post-translational modification N6-(beta-hydroxybutyryl)lysine. A compositionally biased stretch (basic and acidic residues) spans 107–119 (KLDKKAASGEAKP). Composition is skewed to basic residues over residues 120–131 (KPKKAGAAKPKK), 138–170 (KKPKKAAGAKKAVKKTPKKAPKPKAAAKPKVAK), and 179–213 (KSPKKAKAVKPKAAKPKAPKPKAAKAKKTAAKKKK).

The protein belongs to the histone H1/H5 family. H1 histones are progressively phosphorylated during the cell cycle, becoming maximally phosphorylated during late G2 phase and M phase, and being dephosphorylated sharply thereafter. In terms of processing, citrullination at Arg-55 (H1R54ci) by PADI4 takes place within the DNA-binding site of H1 and results in its displacement from chromatin and global chromatin decondensation, thereby promoting pluripotency and stem cell maintenance.

It localises to the nucleus. Its subcellular location is the chromosome. Functionally, histones H1 are necessary for the condensation of nucleosome chains into higher-order structures. This Oryctolagus cuniculus (Rabbit) protein is Histone H1.3.